Consider the following 106-residue polypeptide: HIG1 domain family member 2A (106 aa).

A2 carries the N-acetylalanine modification. In terms of domain architecture, HIG1 spans 20-106; sequence VIEGFSPTVY…LAASAMKSQA (87 aa). A run of 2 helical transmembrane segments spans residues 47–67 and 83–103; these read PMVP…LYCF and IAAQ…SAMK.

Associates with cytochrome c oxidase (COX, complex IV); proposed complex component.

It localises to the mitochondrion membrane. The protein localises to the mitochondrion inner membrane. Proposed subunit of cytochrome c oxidase (COX, complex IV), which is the terminal component of the mitochondrial respiratory chain that catalyzes the reduction of oxygen to water. May be involved in cytochrome c oxidase activity. May play a role in the assembly of respiratory supercomplexes. The protein is HIG1 domain family member 2A (Higd2a) of Mus musculus (Mouse).